We begin with the raw amino-acid sequence, 62 residues long: MCIIVKYSQCNLFFQDVLRCRHVLCMLFSIVVHFRLSSFVSVCGVRIMCNCINCSRFIHNIN.

This is an uncharacterized protein from Saccharomyces cerevisiae (strain ATCC 204508 / S288c) (Baker's yeast).